Consider the following 477-residue polypeptide: Ribulose bisphosphate carboxylase large chain (477 aa).

A propeptide spanning residues methionine 1–serine 2 is cleaved from the precursor. The residue at position 3 (proline 3) is an N-acetylproline. Position 14 is an N6,N6,N6-trimethyllysine (lysine 14). Residues asparagine 123 and threonine 173 each coordinate substrate. The active-site Proton acceptor is lysine 175. Lysine 177 contributes to the substrate binding site. Residues lysine 201, aspartate 203, and glutamate 204 each contribute to the Mg(2+) site. An N6-carboxylysine modification is found at lysine 201. Histidine 294 acts as the Proton acceptor in catalysis. The substrate site is built by arginine 295, histidine 327, and serine 379.

The protein belongs to the RuBisCO large chain family. Type I subfamily. Heterohexadecamer of 8 large chains and 8 small chains; disulfide-linked. The disulfide link is formed within the large subunit homodimers. Mg(2+) is required as a cofactor. The disulfide bond which can form in the large chain dimeric partners within the hexadecamer appears to be associated with oxidative stress and protein turnover.

The protein resides in the plastid. The protein localises to the chloroplast. The enzyme catalyses 2 (2R)-3-phosphoglycerate + 2 H(+) = D-ribulose 1,5-bisphosphate + CO2 + H2O. The catalysed reaction is D-ribulose 1,5-bisphosphate + O2 = 2-phosphoglycolate + (2R)-3-phosphoglycerate + 2 H(+). In terms of biological role, ruBisCO catalyzes two reactions: the carboxylation of D-ribulose 1,5-bisphosphate, the primary event in carbon dioxide fixation, as well as the oxidative fragmentation of the pentose substrate in the photorespiration process. Both reactions occur simultaneously and in competition at the same active site. This chain is Ribulose bisphosphate carboxylase large chain, found in Oryza nivara (Indian wild rice).